The sequence spans 307 residues: UDP-3-O-acyl-N-acetylglucosamine deacetylase (307 aa).

3 residues coordinate Zn(2+): histidine 80, histidine 239, and aspartate 243. Catalysis depends on histidine 266, which acts as the Proton donor.

Belongs to the LpxC family. It depends on Zn(2+) as a cofactor.

The enzyme catalyses a UDP-3-O-[(3R)-3-hydroxyacyl]-N-acetyl-alpha-D-glucosamine + H2O = a UDP-3-O-[(3R)-3-hydroxyacyl]-alpha-D-glucosamine + acetate. The protein operates within glycolipid biosynthesis; lipid IV(A) biosynthesis; lipid IV(A) from (3R)-3-hydroxytetradecanoyl-[acyl-carrier-protein] and UDP-N-acetyl-alpha-D-glucosamine: step 2/6. Its function is as follows. Catalyzes the hydrolysis of UDP-3-O-myristoyl-N-acetylglucosamine to form UDP-3-O-myristoylglucosamine and acetate, the committed step in lipid A biosynthesis. This is UDP-3-O-acyl-N-acetylglucosamine deacetylase from Neisseria meningitidis serogroup C (strain 053442).